The sequence spans 133 residues: Small ribosomal subunit protein uS8 (133 aa).

Belongs to the universal ribosomal protein uS8 family. As to quaternary structure, part of the 30S ribosomal subunit. Contacts proteins S5 and S12.

Functionally, one of the primary rRNA binding proteins, it binds directly to 16S rRNA central domain where it helps coordinate assembly of the platform of the 30S subunit. This chain is Small ribosomal subunit protein uS8, found in Synechococcus sp. (strain CC9605).